The following is a 143-amino-acid chain: High mobility group protein B (143 aa).

The segment at 1-22 is disordered; sequence MSKAASQYATLEDLPSKPKRPQ. The HMG box DNA-binding region spans 18–86; that stretch reads PKRPQTGFFI…TYDKQNDQWK (69 aa). At A70 the chain carries Blocked amino end (Ala). Basic and acidic residues-rich tracts occupy residues 100–120 and 131–143; these read AKKA…ELEK and AKKD…AKKK. The segment at 100 to 143 is disordered; the sequence is AKKALKEKTKKSKAAEKELEKSKKKAPAAAPAKKDDKKAPAKKK.

It is found in the nucleus. The protein localises to the chromosome. The polypeptide is High mobility group protein B (Tetrahymena thermophila).